The following is a 1191-amino-acid chain: Putative glycoside hydrolase 22789 (1191 aa).

Residues 173–187 (PSSSGASSVLPSPSA) are compositionally biased toward low complexity. The disordered stretch occupies residues 173–221 (PSSSGASSVLPSPSAHTPDAATDANHLPNPDPASGRQELTRAGRPARKK).

It belongs to the glycoside hydrolase-like 3 (GHL3) family.

This Monosiga brevicollis (Choanoflagellate) protein is Putative glycoside hydrolase 22789.